The following is a 398-amino-acid chain: Elongation factor Tu (398 aa).

The tr-type G domain maps to K10–E207. A G1 region spans residues G19–T26. Residue G19 to T26 participates in GTP binding. T26 is a binding site for Mg(2+). The interval G63 to N67 is G2. The G3 stretch occupies residues D84 to G87. GTP contacts are provided by residues D84–H88 and N139–D142. The tract at residues N139 to D142 is G4. The G5 stretch occupies residues S177–L179.

Belongs to the TRAFAC class translation factor GTPase superfamily. Classic translation factor GTPase family. EF-Tu/EF-1A subfamily. In terms of assembly, monomer.

Its subcellular location is the cytoplasm. The enzyme catalyses GTP + H2O = GDP + phosphate + H(+). Its function is as follows. GTP hydrolase that promotes the GTP-dependent binding of aminoacyl-tRNA to the A-site of ribosomes during protein biosynthesis. In Streptococcus mutans serotype c (strain ATCC 700610 / UA159), this protein is Elongation factor Tu.